Consider the following 389-residue polypeptide: Succinate--CoA ligase [ADP-forming] subunit beta (389 aa).

One can recognise an ATP-grasp domain in the interval 9–244; sequence KQLLAEYGIP…KTQEDETEVT (236 aa). ATP contacts are provided by residues Lys46, 53 to 55, Gly102, and Glu107; that span reads GRG. Mg(2+)-binding residues include Asn199 and Asp213. Substrate contacts are provided by residues Asn264 and 321–323; that span reads GIV.

It belongs to the succinate/malate CoA ligase beta subunit family. As to quaternary structure, heterotetramer of two alpha and two beta subunits. It depends on Mg(2+) as a cofactor.

The enzyme catalyses succinate + ATP + CoA = succinyl-CoA + ADP + phosphate. It carries out the reaction GTP + succinate + CoA = succinyl-CoA + GDP + phosphate. The protein operates within carbohydrate metabolism; tricarboxylic acid cycle; succinate from succinyl-CoA (ligase route): step 1/1. Functionally, succinyl-CoA synthetase functions in the citric acid cycle (TCA), coupling the hydrolysis of succinyl-CoA to the synthesis of either ATP or GTP and thus represents the only step of substrate-level phosphorylation in the TCA. The beta subunit provides nucleotide specificity of the enzyme and binds the substrate succinate, while the binding sites for coenzyme A and phosphate are found in the alpha subunit. In Xanthomonas campestris pv. campestris (strain 8004), this protein is Succinate--CoA ligase [ADP-forming] subunit beta.